We begin with the raw amino-acid sequence, 364 residues long: DNA polymerase IV (364 aa).

In terms of domain architecture, UmuC spans isoleucine 14–glycine 198. Mg(2+)-binding residues include aspartate 18 and aspartate 116. Glutamate 117 is an active-site residue.

The protein belongs to the DNA polymerase type-Y family. Monomer. Requires Mg(2+) as cofactor.

The protein resides in the cytoplasm. It catalyses the reaction DNA(n) + a 2'-deoxyribonucleoside 5'-triphosphate = DNA(n+1) + diphosphate. Poorly processive, error-prone DNA polymerase involved in untargeted mutagenesis. Copies undamaged DNA at stalled replication forks, which arise in vivo from mismatched or misaligned primer ends. These misaligned primers can be extended by PolIV. Exhibits no 3'-5' exonuclease (proofreading) activity. May be involved in translesional synthesis, in conjunction with the beta clamp from PolIII. The chain is DNA polymerase IV from Lactococcus lactis subsp. cremoris (strain MG1363).